The primary structure comprises 244 residues: Ribonuclease PH (244 aa).

Residues arginine 90 and 128-130 (GTR) each bind phosphate.

This sequence belongs to the RNase PH family. Homohexameric ring arranged as a trimer of dimers.

It carries out the reaction tRNA(n+1) + phosphate = tRNA(n) + a ribonucleoside 5'-diphosphate. Functionally, phosphorolytic 3'-5' exoribonuclease that plays an important role in tRNA 3'-end maturation. Removes nucleotide residues following the 3'-CCA terminus of tRNAs; can also add nucleotides to the ends of RNA molecules by using nucleoside diphosphates as substrates, but this may not be physiologically important. Probably plays a role in initiation of 16S rRNA degradation (leading to ribosome degradation) during starvation. The polypeptide is Ribonuclease PH (Cutibacterium acnes (strain DSM 16379 / KPA171202) (Propionibacterium acnes)).